The following is a 517-amino-acid chain: ATP synthase subunit alpha 2 (517 aa).

173–180 (GDRQTGKT) contributes to the ATP binding site.

The protein belongs to the ATPase alpha/beta chains family. As to quaternary structure, F-type ATPases have 2 components, CF(1) - the catalytic core - and CF(0) - the membrane proton channel. CF(1) has five subunits: alpha(3), beta(3), gamma(1), delta(1), epsilon(1). CF(0) has three main subunits: a(1), b(2) and c(9-12). The alpha and beta chains form an alternating ring which encloses part of the gamma chain. CF(1) is attached to CF(0) by a central stalk formed by the gamma and epsilon chains, while a peripheral stalk is formed by the delta and b chains.

The protein localises to the cell inner membrane. It catalyses the reaction ATP + H2O + 4 H(+)(in) = ADP + phosphate + 5 H(+)(out). Its function is as follows. Produces ATP from ADP in the presence of a proton gradient across the membrane. The alpha chain is a regulatory subunit. The protein is ATP synthase subunit alpha 2 of Legionella pneumophila (strain Corby).